Here is a 113-residue protein sequence, read N- to C-terminus: Na(+)/H(+) antiporter subunit C1 (113 aa).

3 consecutive transmembrane segments (helical) span residues 1–21, 28–48, and 72–92; these read MEIIMIFVSGILTAISVYLVL, IVMGTTLLTHAANLFLITMGG, and LILTAIVIAFATTAFFLVLAF.

It belongs to the CPA3 antiporters (TC 2.A.63) subunit C family. In terms of assembly, may form a heterooligomeric complex that consists of seven subunits: mnhA1, mnhB1, mnhC1, mnhD1, mnhE1, mnhF1 and mnhG1.

Its subcellular location is the cell membrane. Its function is as follows. Mnh complex is a Na(+)/H(+) antiporter involved in Na(+) excretion. This is Na(+)/H(+) antiporter subunit C1 (mnhC1) from Staphylococcus aureus (strain JH1).